Here is a 246-residue protein sequence, read N- to C-terminus: 1-(5-phosphoribosyl)-5-[(5-phosphoribosylamino)methylideneamino] imidazole-4-carboxamide isomerase (246 aa).

The active-site Proton acceptor is aspartate 8. Catalysis depends on aspartate 130, which acts as the Proton donor.

This sequence belongs to the HisA/HisF family.

The protein resides in the cytoplasm. It carries out the reaction 1-(5-phospho-beta-D-ribosyl)-5-[(5-phospho-beta-D-ribosylamino)methylideneamino]imidazole-4-carboxamide = 5-[(5-phospho-1-deoxy-D-ribulos-1-ylimino)methylamino]-1-(5-phospho-beta-D-ribosyl)imidazole-4-carboxamide. Its pathway is amino-acid biosynthesis; L-histidine biosynthesis; L-histidine from 5-phospho-alpha-D-ribose 1-diphosphate: step 4/9. This Alcanivorax borkumensis (strain ATCC 700651 / DSM 11573 / NCIMB 13689 / SK2) protein is 1-(5-phosphoribosyl)-5-[(5-phosphoribosylamino)methylideneamino] imidazole-4-carboxamide isomerase.